Reading from the N-terminus, the 312-residue chain is HPr kinase/phosphorylase (312 aa).

Catalysis depends on residues histidine 139 and lysine 160. ATP is bound at residue 154–161 (GDSGIGKS). Position 161 (serine 161) interacts with Mg(2+). The active-site Proton acceptor; for phosphorylation activity. Proton donor; for dephosphorylation activity is the aspartate 178. The important for the catalytic mechanism of both phosphorylation and dephosphorylation stretch occupies residues 202-211 (IEIRGVGIID). Glutamate 203 contacts Mg(2+). Arginine 244 is an active-site residue. An important for the catalytic mechanism of dephosphorylation region spans residues 265–270 (PVKTGR).

It belongs to the HPrK/P family. As to quaternary structure, homohexamer. It depends on Mg(2+) as a cofactor.

The enzyme catalyses [HPr protein]-L-serine + ATP = [HPr protein]-O-phospho-L-serine + ADP + H(+). It carries out the reaction [HPr protein]-O-phospho-L-serine + phosphate + H(+) = [HPr protein]-L-serine + diphosphate. In terms of biological role, catalyzes the ATP- as well as the pyrophosphate-dependent phosphorylation of a specific serine residue in HPr, a phosphocarrier protein of the phosphoenolpyruvate-dependent sugar phosphotransferase system (PTS). HprK/P also catalyzes the pyrophosphate-producing, inorganic phosphate-dependent dephosphorylation (phosphorolysis) of seryl-phosphorylated HPr (P-Ser-HPr). The two antagonistic activities of HprK/P are regulated by several intracellular metabolites, which change their concentration in response to the absence or presence of rapidly metabolisable carbon sources (glucose, fructose, etc.) in the growth medium. Therefore, by controlling the phosphorylation state of HPr, HPrK/P is a sensor enzyme that plays a major role in the regulation of carbon metabolism and sugar transport: it mediates carbon catabolite repression (CCR), and regulates PTS-catalyzed carbohydrate uptake and inducer exclusion. This chain is HPr kinase/phosphorylase, found in Streptococcus pneumoniae (strain ATCC BAA-255 / R6).